A 117-amino-acid chain; its full sequence is UPF0342 protein LEUM_1212 (117 aa).

It belongs to the UPF0342 family.

This is UPF0342 protein LEUM_1212 from Leuconostoc mesenteroides subsp. mesenteroides (strain ATCC 8293 / DSM 20343 / BCRC 11652 / CCM 1803 / JCM 6124 / NCDO 523 / NBRC 100496 / NCIMB 8023 / NCTC 12954 / NRRL B-1118 / 37Y).